Reading from the N-terminus, the 72-residue chain is Translation initiation factor IF-1 (72 aa).

Positions 1–72 (MAKEESIKMN…SKGRITYRAR (72 aa)) constitute an S1-like domain.

Belongs to the IF-1 family. As to quaternary structure, component of the 30S ribosomal translation pre-initiation complex which assembles on the 30S ribosome in the order IF-2 and IF-3, IF-1 and N-formylmethionyl-tRNA(fMet); mRNA recruitment can occur at any time during PIC assembly.

Its subcellular location is the cytoplasm. Functionally, one of the essential components for the initiation of protein synthesis. Stabilizes the binding of IF-2 and IF-3 on the 30S subunit to which N-formylmethionyl-tRNA(fMet) subsequently binds. Helps modulate mRNA selection, yielding the 30S pre-initiation complex (PIC). Upon addition of the 50S ribosomal subunit IF-1, IF-2 and IF-3 are released leaving the mature 70S translation initiation complex. The polypeptide is Translation initiation factor IF-1 (Alkalilimnicola ehrlichii (strain ATCC BAA-1101 / DSM 17681 / MLHE-1)).